A 419-amino-acid chain; its full sequence is MLAARTGAAGSQISEENTKLRRQSGFSVAGKDKSPKKASENAKDSSLSPSGESQLRARQLALLREVEMNWYLKLCDLSSEHTTVCTTGMPHRNLGKSGLRVSCLGLGTWVTFGGQISDEVAERLMTIAYESGVNLFDTAEVYAAGKAEVILGSIIKKKGWRRSSLVITTKLYWGGKAETERGLSRKHIIEGLKGSLQRLQLEYVDVVFANRPDSNTPMEEIVRAMTHVINQGMAMYWGTSRWSAMEIMEAYSVARQFNMIPPVCEQAEYHLFQREKVEVQLPELYHKIGVGAMTWSPLACGIISGKYGNGVPESSRASLKCYQWLKERIVSEEGRKQQNKLKDLSPIAERLGCTLPQLAVAWCLRNEGVSSVLLGSSTPEQLIENLGAIQVLPKMTSHVVNEIDNILRNKPYSKKDYRS.

Positions 1-52 (MLAARTGAAGSQISEENTKLRRQSGFSVAGKDKSPKKASENAKDSSLSPSGE) are disordered. The span at 30–43 (GKDKSPKKASENAK) shows a compositional bias: basic and acidic residues. Residues threonine 108, tryptophan 109, glutamine 115, and aspartate 137 each coordinate NADP(+). Catalysis depends on tyrosine 142, which acts as the Proton donor/acceptor. NADP(+)-binding residues include asparagine 210, serine 240, arginine 241, glutamine 266, tryptophan 295, serine 296, proline 297, leucine 298, alanine 299, cysteine 300, lysine 306, arginine 316, glycine 375, serine 377, glutamine 381, glutamate 384, and asparagine 385.

Belongs to the shaker potassium channel beta subunit family. As to quaternary structure, homotetramer. Interaction with tetrameric potassium channel alpha subunits gives rise to a heterooctamer. Identified in potassium channel complexes containing KCNA1, KCNA2, KCNA4, KCNA5, KCNA6, KCNAB1 and KCNAB2. Part of a complex containing KCNA1, KCNA4 and LGI1; interaction with LGI1 inhibits down-regulation of KCNA1 channel activity. Interacts with the dimer formed by GNB1 and GNG2; this enhances KCNA1 binding. Interacts with SQSTM1. As to expression, in brain, expression is most prominent in caudate nucleus, hippocampus and thalamus. Significant expression also detected in amygdala and subthalamic nucleus. Also expressed in both healthy and cardiomyopathic heart. Up to four times more abundant in left ventricle than left atrium.

The protein resides in the cytoplasm. It is found in the membrane. The protein localises to the cell membrane. It catalyses the reaction a primary alcohol + NADP(+) = an aldehyde + NADPH + H(+). The catalysed reaction is a secondary alcohol + NADP(+) = a ketone + NADPH + H(+). Regulatory subunit of the voltage-gated potassium (Kv) Shaker channels composed of pore-forming and potassium-conducting alpha subunits and of regulatory beta subunits. The beta-1/KCNAB1 cytoplasmic subunit mediates closure of delayed rectifier potassium channels by physically obstructing the pore via its N-terminal domain and increases the speed of channel closure for other family members. Promotes the inactivation of Kv1.1/KCNA1, Kv1.2/KCNA2, Kv1.4/KCNA4, Kv1.5/KCNA5 and Kv1.6/KCNA6 alpha subunit-containing channels. Displays nicotinamide adenine dinucleotide phosphate (NADPH)-dependent aldoketoreductase activity by catalyzing the NADPH-dependent reduction of a variety of endogenous aldehydes and ketones. The binding of NADPH is required for efficient down-regulation of potassium channel activity. Oxidation of the bound NADPH restrains N-terminal domain from blocking the channel, thereby decreasing N-type inactivation of potassium channel activity. Functionally, isoform KvB1.2 shows no effect on KCNA1, KCNA2 or KCNB1. The protein is Voltage-gated potassium channel subunit beta-1 of Homo sapiens (Human).